Reading from the N-terminus, the 186-residue chain is Small ribosomal subunit protein uS7 (186 aa).

The protein belongs to the universal ribosomal protein uS7 family. As to quaternary structure, part of the 30S ribosomal subunit.

Functionally, one of the primary rRNA binding proteins, it binds directly to 16S rRNA where it nucleates assembly of the head domain of the 30S subunit. Is located at the subunit interface close to the decoding center. This chain is Small ribosomal subunit protein uS7, found in Methanothermobacter thermautotrophicus (strain ATCC 29096 / DSM 1053 / JCM 10044 / NBRC 100330 / Delta H) (Methanobacterium thermoautotrophicum).